A 215-amino-acid polypeptide reads, in one-letter code: Cytochrome b6 (215 aa).

A helical membrane pass occupies residues isoleucine 32 to phenylalanine 52. Cysteine 35 contacts heme c. Heme b-binding residues include histidine 86 and histidine 100. 3 consecutive transmembrane segments (helical) span residues alanine 90–phenylalanine 110, leucine 116–tyrosine 136, and leucine 186–isoleucine 206. Residues histidine 187 and histidine 202 each contribute to the heme b site.

It belongs to the cytochrome b family. PetB subfamily. In terms of assembly, the 4 large subunits of the cytochrome b6-f complex are cytochrome b6, subunit IV (17 kDa polypeptide, PetD), cytochrome f and the Rieske protein, while the 4 small subunits are PetG, PetL, PetM and PetN. The complex functions as a dimer. Heme b is required as a cofactor. Requires heme c as cofactor.

It is found in the plastid. Its subcellular location is the chloroplast thylakoid membrane. Functionally, component of the cytochrome b6-f complex, which mediates electron transfer between photosystem II (PSII) and photosystem I (PSI), cyclic electron flow around PSI, and state transitions. This Populus alba (White poplar) protein is Cytochrome b6.